Consider the following 193-residue polypeptide: Major structural subunit of bundle-forming pilus (193 aa).

Positions 1 to 13 (MVSKIMNKKYEKG) are excised as a propeptide. The residue at position 14 (leucine 14) is an N-methylleucine. The chain crosses the membrane as a helical span at residues 14–35 (LSLIESAMVLALAATVTAGVMF). Residues cysteine 129 and cysteine 179 are joined by a disulfide bond.

Belongs to the N-Me-Phe pilin family. In terms of assembly, 10 to 100 laterally aligned filaments or bundle-forming pili coalesce into rope-like bundles. These form linkages between the bacteria within the enteropathogenic E.coli (EPEC) microcolonies that are attached to epithelial cells.

It is found in the fimbrium. The protein resides in the membrane. Functionally, major repeating bundle-forming pilus (BFP) subunit. Is required for EPEC localized adherence. In Escherichia coli O111:H-, this protein is Major structural subunit of bundle-forming pilus (bfpA).